Here is a 340-residue protein sequence, read N- to C-terminus: Aspartate-semialdehyde dehydrogenase (340 aa).

Residues 11-14 (TGEV) and 39-40 (RS) contribute to the NADP(+) site. Phosphate is bound at residue arginine 100. Residue cysteine 131 is the Acyl-thioester intermediate of the active site. Residue glutamine 158 participates in substrate binding. 161 to 162 (SG) contacts NADP(+). Phosphate is bound at residue lysine 216. Residue arginine 238 coordinates substrate. Residue histidine 245 is the Proton acceptor of the active site. Position 318 (asparagine 318) interacts with NADP(+).

This sequence belongs to the aspartate-semialdehyde dehydrogenase family. Homodimer.

It catalyses the reaction L-aspartate 4-semialdehyde + phosphate + NADP(+) = 4-phospho-L-aspartate + NADPH + H(+). It participates in amino-acid biosynthesis; L-lysine biosynthesis via DAP pathway; (S)-tetrahydrodipicolinate from L-aspartate: step 2/4. It functions in the pathway amino-acid biosynthesis; L-methionine biosynthesis via de novo pathway; L-homoserine from L-aspartate: step 2/3. The protein operates within amino-acid biosynthesis; L-threonine biosynthesis; L-threonine from L-aspartate: step 2/5. Functionally, catalyzes the NADPH-dependent formation of L-aspartate-semialdehyde (L-ASA) by the reductive dephosphorylation of L-aspartyl-4-phosphate. This chain is Aspartate-semialdehyde dehydrogenase, found in Aquifex aeolicus (strain VF5).